A 357-amino-acid polypeptide reads, in one-letter code: Chorismate synthase (357 aa).

Residue Arg47 participates in NADP(+) binding. FMN-binding positions include 123–125 (RSS), Gly281, 296–300 (KPTSS), and Arg324.

This sequence belongs to the chorismate synthase family. In terms of assembly, homotetramer. Requires FMNH2 as cofactor.

It catalyses the reaction 5-O-(1-carboxyvinyl)-3-phosphoshikimate = chorismate + phosphate. It functions in the pathway metabolic intermediate biosynthesis; chorismate biosynthesis; chorismate from D-erythrose 4-phosphate and phosphoenolpyruvate: step 7/7. Functionally, catalyzes the anti-1,4-elimination of the C-3 phosphate and the C-6 proR hydrogen from 5-enolpyruvylshikimate-3-phosphate (EPSP) to yield chorismate, which is the branch point compound that serves as the starting substrate for the three terminal pathways of aromatic amino acid biosynthesis. This reaction introduces a second double bond into the aromatic ring system. This Chlamydia muridarum (strain MoPn / Nigg) protein is Chorismate synthase.